A 279-amino-acid polypeptide reads, in one-letter code: DegV domain-containing protein lmo1863 (279 aa).

Residues 4-278 (IKIITDSTAG…TGAFAFMYYT (275 aa)) form the DegV domain. Serine 62 and serine 94 together coordinate hexadecanoate.

In terms of biological role, may bind long-chain fatty acids, such as palmitate, and may play a role in lipid transport or fatty acid metabolism. The protein is DegV domain-containing protein lmo1863 of Listeria monocytogenes serovar 1/2a (strain ATCC BAA-679 / EGD-e).